Here is a 162-residue protein sequence, read N- to C-terminus: Chemoreceptor glutamine deamidase CheD (162 aa).

The protein belongs to the CheD family. Forms a complex with CheC.

The enzyme catalyses L-glutaminyl-[protein] + H2O = L-glutamyl-[protein] + NH4(+). Its function is as follows. Deamidates glutamine residues to glutamate on methyl-accepting chemotaxis receptors (MCPs). CheD-mediated MCP deamidation is required for productive communication of the conformational signals of the chemoreceptors to the CheA kinase. The protein is Chemoreceptor glutamine deamidase CheD of Halalkalibacterium halodurans (strain ATCC BAA-125 / DSM 18197 / FERM 7344 / JCM 9153 / C-125) (Bacillus halodurans).